Here is a 96-residue protein sequence, read N- to C-terminus: Integration host factor subunit beta (96 aa).

This sequence belongs to the bacterial histone-like protein family. As to quaternary structure, heterodimer of an alpha and a beta chain.

Its function is as follows. This protein is one of the two subunits of integration host factor, a specific DNA-binding protein that functions in genetic recombination as well as in transcriptional and translational control. The sequence is that of Integration host factor subunit beta from Methylocella silvestris (strain DSM 15510 / CIP 108128 / LMG 27833 / NCIMB 13906 / BL2).